Here is a 223-residue protein sequence, read N- to C-terminus: uncharacterized protein (223 aa).

The signal sequence occupies residues Met1 to Ala22. One can recognise a VWFA domain in the interval Asp30–Arg204. Residues Ala199–Asp223 form a disordered region.

This is an uncharacterized protein from Treponema pallidum (strain Nichols).